The primary structure comprises 113 residues: Gamma-glutamylcyclotransferase family protein YtfP (113 aa).

It belongs to the gamma-glutamylcyclotransferase family.

The polypeptide is Gamma-glutamylcyclotransferase family protein YtfP (ytfP) (Escherichia coli O157:H7).